Consider the following 379-residue polypeptide: Epoxyqueuosine reductase (379 aa).

The Proton donor role is filled by aspartate 139. Residues 181–213 (IPLPVDQPVEEGCGKCVACMTICPTGAIVEPYT) form the 4Fe-4S ferredoxin-type domain. Residues cysteine 193, cysteine 196, cysteine 199, cysteine 203, cysteine 219, cysteine 246, cysteine 249, and cysteine 253 each contribute to the [4Fe-4S] cluster site.

The protein belongs to the QueG family. In terms of assembly, monomer. The cofactor is cob(II)alamin. [4Fe-4S] cluster is required as a cofactor.

Its subcellular location is the cytoplasm. It catalyses the reaction epoxyqueuosine(34) in tRNA + AH2 = queuosine(34) in tRNA + A + H2O. It functions in the pathway tRNA modification; tRNA-queuosine biosynthesis. Catalyzes the conversion of epoxyqueuosine (oQ) to queuosine (Q), which is a hypermodified base found in the wobble positions of tRNA(Asp), tRNA(Asn), tRNA(His) and tRNA(Tyr). The protein is Epoxyqueuosine reductase of Escherichia coli (strain K12).